The sequence spans 185 residues: Thymidine kinase (185 aa).

ATP is bound by residues 10 to 17 (GPMYSGKT) and 83 to 86 (DEVQ). The Proton acceptor role is filled by glutamate 84. Positions 140, 143, 173, and 176 each coordinate Zn(2+).

It belongs to the thymidine kinase family. In terms of assembly, homotetramer.

The protein localises to the cytoplasm. It catalyses the reaction thymidine + ATP = dTMP + ADP + H(+). The polypeptide is Thymidine kinase (Pseudothermotoga lettingae (strain ATCC BAA-301 / DSM 14385 / NBRC 107922 / TMO) (Thermotoga lettingae)).